The primary structure comprises 341 residues: Phosphate acyltransferase (341 aa).

The protein belongs to the PlsX family. Homodimer. Probably interacts with PlsY.

It is found in the cytoplasm. It catalyses the reaction a fatty acyl-[ACP] + phosphate = an acyl phosphate + holo-[ACP]. It participates in lipid metabolism; phospholipid metabolism. Catalyzes the reversible formation of acyl-phosphate (acyl-PO(4)) from acyl-[acyl-carrier-protein] (acyl-ACP). This enzyme utilizes acyl-ACP as fatty acyl donor, but not acyl-CoA. In Elusimicrobium minutum (strain Pei191), this protein is Phosphate acyltransferase.